The primary structure comprises 64 residues: Epidermal growth factor (64 aa).

Positions 1-21 are cleaved as a signal peptide; that stretch reads MMRHLLLVGAAILIFVSDAQA. Position 22 is a pyrrolidone carboxylic acid (Gln-22). In terms of domain architecture, EGF-like spans 25–61; it reads GEDPCQIVRCSYGANCIAYGDTAICECPFGYSGIRCQ. 3 disulfides stabilise this stretch: Cys-29–Cys-40, Cys-34–Cys-49, and Cys-51–Cys-60.

Albumen gland. Up-regulated in adult CNS after axotomy.

Its subcellular location is the secreted. Its function is as follows. Induces neurite outgrowth in specific adult neurons in vitro. The polypeptide is Epidermal growth factor (Lymnaea stagnalis (Great pond snail)).